Reading from the N-terminus, the 609-residue chain is Proline--tRNA ligase (609 aa).

The protein belongs to the class-II aminoacyl-tRNA synthetase family. ProS type 1 subfamily. Homodimer.

The protein resides in the cytoplasm. The enzyme catalyses tRNA(Pro) + L-proline + ATP = L-prolyl-tRNA(Pro) + AMP + diphosphate. Functionally, catalyzes the attachment of proline to tRNA(Pro) in a two-step reaction: proline is first activated by ATP to form Pro-AMP and then transferred to the acceptor end of tRNA(Pro). As ProRS can inadvertently accommodate and process non-cognate amino acids such as alanine and cysteine, to avoid such errors it has two additional distinct editing activities against alanine. One activity is designated as 'pretransfer' editing and involves the tRNA(Pro)-independent hydrolysis of activated Ala-AMP. The other activity is designated 'posttransfer' editing and involves deacylation of mischarged Ala-tRNA(Pro). The misacylated Cys-tRNA(Pro) is not edited by ProRS. In Synechococcus sp. (strain JA-2-3B'a(2-13)) (Cyanobacteria bacterium Yellowstone B-Prime), this protein is Proline--tRNA ligase.